The primary structure comprises 349 residues: Succinylglutamate desuccinylase (349 aa).

Residues His-70, Glu-73, and His-166 each contribute to the Zn(2+) site. Glu-229 is a catalytic residue.

This sequence belongs to the AspA/AstE family. Succinylglutamate desuccinylase subfamily. It depends on Zn(2+) as a cofactor.

It carries out the reaction N-succinyl-L-glutamate + H2O = L-glutamate + succinate. It participates in amino-acid degradation; L-arginine degradation via AST pathway; L-glutamate and succinate from L-arginine: step 5/5. Its function is as follows. Transforms N(2)-succinylglutamate into succinate and glutamate. This is Succinylglutamate desuccinylase from Burkholderia mallei (strain ATCC 23344).